The primary structure comprises 146 residues: uncharacterized protein (146 aa).

An N-terminal signal peptide occupies residues M1–A17. 2 disordered regions span residues N27–L54 and E70–P146. Low complexity predominate over residues Q32–L54. Polar residues predominate over residues S77–H118.

This is an uncharacterized protein from Escherichia coli (strain K12).